We begin with the raw amino-acid sequence, 885 residues long: Cadherin-1 (885 aa).

The first 26 residues, 1–26, serve as a signal peptide directing secretion; sequence MGPRYGGAPALLLPLLLLLQVSSGLC. Residues 27–156 constitute a propeptide that is removed on maturation; sequence QEPEPCRPGF…SQHGLRRQKR (130 aa). The segment covering 121-131 has biased composition (basic residues); that stretch reads KAATHHHHHHH. Positions 121-141 are disordered; it reads KAATHHHHHHHDAPSKTQTEV. The Extracellular segment spans residues 157–712; the sequence is DWVIPPISCP…YAEAGLQVPA (556 aa). 5 consecutive Cadherin domains span residues 158–264, 265–377, 378–488, 489–597, and 607–688; these read WVIP…KPEF, TQAV…PPIF, NPTT…APIF, IPCP…GPIP, and KNPQ…VFVC. D259 is a binding site for Ca(2+). O-linked (Man...) serine glycosylation is present at S282. O-linked (Man...) threonine glycosylation occurs at T287. D290 contacts Ca(2+). Residues T360, T472, T474, and T511 are each glycosylated (O-linked (Man...) threonine). The N-linked (GlcNAc...) asparagine glycan is linked to N560. Residues T578, T580, and T582 are each glycosylated (O-linked (Man...) threonine). N-linked (GlcNAc...) asparagine glycosylation is present at N639. Residues 713–733 form a helical membrane-spanning segment; that stretch reads ILGILGGILALLILILLLLLF. Residues 734–885 are Cytoplasmic-facing; sequence VRRRRVVKEP…ADMYGGGEDD (152 aa). A disordered region spans residues 750 to 770; that stretch reads DTRDNVYYYDEEGGGEEDQDF. Phosphotyrosine; by SRC occurs at positions 756, 757, and 758. A compositionally biased stretch (acidic residues) spans 758-770; sequence YDEEGGGEEDQDF. The segment at 761-772 is required for binding CTNND1 and PSEN1; the sequence is EGGGEEDQDFDL. Phosphoserine is present on residues S773, S796, S841, S843, and S849. A disordered region spans residues 792 to 811; that stretch reads PTLLSVPQYRPRPANPDEIG. Residues 814–885 form a required for binding alpha, beta and gamma catenins region; sequence IDENLKAADT…ADMYGGGEDD (72 aa).

In terms of assembly, homodimer; disulfide-linked. Component of an E-cadherin/ catenin adhesion complex composed of at least E-cadherin/CDH1, beta-catenin/CTNNB1 or gamma-catenin/JUP, and potentially alpha-catenin/CTNNA1; the complex is located to adherens junctions. Found in a complex composed of CDH1, RAP1A and PKP3; PKP3 acts as a scaffold protein within the complex, the complex is required for CDH1 localization to mature desmosome cell junctions. Interacts with the TRPV4 and CTNNB1 complex. Interacts with CTNND1. The stable association of CTNNA1 is controversial as CTNNA1 was shown not to bind to F-actin when assembled in the complex. Alternatively, the CTNNA1-containing complex may be linked to F-actin by other proteins such as LIMA1. Interaction with PSEN1, cleaves CDH1 resulting in the disassociation of cadherin-based adherens junctions (CAJs). Interacts with AJAP1 and DLGAP5. Interacts with TBC1D2. Interacts with LIMA1. Interacts with CAV1. Interacts with PIP5K1C. Interacts with RAB8B. Interacts with DDR1; this stabilizes CDH1 at the cell surface and inhibits its internalization. Interacts with RAPGEF2. Interacts with KLRG1. Forms a ternary complex composed of ADAM10, CADH1 and EPHA4; within the complex, CADH1 is cleaved by ADAM10 which disrupts adherens junctions. Interacts with SPEF1. Interacts with CTNNB1 and PKP2. Interacts with AMOTL2; the interaction may facilitate binding of radial actin fibers to cell junction complexes. Interacts with DSG3; the interaction is required for CDH1 localization to developing adherens junctions. During apoptosis or with calcium influx, cleaved by a membrane-bound metalloproteinase (ADAM10), PS1/gamma-secretase and caspase-3. Processing by the metalloproteinase, induced by calcium influx, causes disruption of cell-cell adhesion and the subsequent release of beta-catenin into the cytoplasm. The residual membrane-tethered cleavage product is rapidly degraded via an intracellular proteolytic pathway. Cleavage by caspase-3 releases the cytoplasmic tail resulting in disintegration of the actin microfilament system. The gamma-secretase-mediated cleavage promotes disassembly of adherens junctions. During development of the cochlear organ of Corti, cleavage by ADAM10 at adherens junctions promotes pillar cell separation. Post-translationally, N-glycosylation at Asn-639 is essential for expression, folding and trafficking. Addition of bisecting N-acetylglucosamine by MGAT3 modulates its cell membrane location. In terms of processing, ubiquitinated by a SCF complex containing SKP2, which requires prior phosphorylation by CK1/CSNK1A1. Ubiquitinated by CBLL1/HAKAI, requires prior phosphorylation at Tyr-757. O-glycosylated. O-manosylated by TMTC1, TMTC2, TMTC3 or TMTC4. Thr-287 and Thr-511 are O-mannosylated by TMTC2 or TMTC4 but not TMTC1 or TMTC3.

Its subcellular location is the cell junction. It localises to the adherens junction. The protein localises to the cell membrane. The protein resides in the endosome. It is found in the golgi apparatus. Its subcellular location is the trans-Golgi network. It localises to the cytoplasm. The protein localises to the desmosome. Cadherins are calcium-dependent cell adhesion proteins. They preferentially interact with themselves in a homophilic manner in connecting cells; cadherins may thus contribute to the sorting of heterogeneous cell types. CDH1 is involved in mechanisms regulating cell-cell adhesions, mobility and proliferation of epithelial cells. Promotes organization of radial actin fiber structure and cellular response to contractile forces, via its interaction with AMOTL2 which facilitates anchoring of radial actin fibers to CDH1 junction complexes at the cell membrane. Plays a role in the early stages of desmosome cell-cell junction formation via facilitating the recruitment of DSG2 and DSP to desmosome plaques. Has a potent invasive suppressor role. It is a ligand for integrin alpha-E/beta-7. Its function is as follows. E-Cad/CTF2 promotes non-amyloidogenic degradation of Abeta precursors. Has a strong inhibitory effect on APP C99 and C83 production. This Canis lupus familiaris (Dog) protein is Cadherin-1 (CDH1).